A 476-amino-acid chain; its full sequence is Aspartyl/glutamyl-tRNA(Asn/Gln) amidotransferase subunit B (476 aa).

The protein belongs to the GatB/GatE family. GatB subfamily. As to quaternary structure, heterotrimer of A, B and C subunits.

The catalysed reaction is L-glutamyl-tRNA(Gln) + L-glutamine + ATP + H2O = L-glutaminyl-tRNA(Gln) + L-glutamate + ADP + phosphate + H(+). It carries out the reaction L-aspartyl-tRNA(Asn) + L-glutamine + ATP + H2O = L-asparaginyl-tRNA(Asn) + L-glutamate + ADP + phosphate + 2 H(+). In terms of biological role, allows the formation of correctly charged Asn-tRNA(Asn) or Gln-tRNA(Gln) through the transamidation of misacylated Asp-tRNA(Asn) or Glu-tRNA(Gln) in organisms which lack either or both of asparaginyl-tRNA or glutaminyl-tRNA synthetases. The reaction takes place in the presence of glutamine and ATP through an activated phospho-Asp-tRNA(Asn) or phospho-Glu-tRNA(Gln). The chain is Aspartyl/glutamyl-tRNA(Asn/Gln) amidotransferase subunit B from Neisseria meningitidis serogroup C / serotype 2a (strain ATCC 700532 / DSM 15464 / FAM18).